The primary structure comprises 195 residues: Protein GrpE (195 aa).

Positions 1-14 (MQEPHDQEPIEKQK) are enriched in basic and acidic residues. Positions 1-45 (MQEPHDQEPIEKQKLPGMDDVLETEHSGTVAGNTERAGEDAAPSL) are disordered.

The protein belongs to the GrpE family. In terms of assembly, homodimer.

It is found in the cytoplasm. In terms of biological role, participates actively in the response to hyperosmotic and heat shock by preventing the aggregation of stress-denatured proteins, in association with DnaK and GrpE. It is the nucleotide exchange factor for DnaK and may function as a thermosensor. Unfolded proteins bind initially to DnaJ; upon interaction with the DnaJ-bound protein, DnaK hydrolyzes its bound ATP, resulting in the formation of a stable complex. GrpE releases ADP from DnaK; ATP binding to DnaK triggers the release of the substrate protein, thus completing the reaction cycle. Several rounds of ATP-dependent interactions between DnaJ, DnaK and GrpE are required for fully efficient folding. This is Protein GrpE from Nitrosomonas europaea (strain ATCC 19718 / CIP 103999 / KCTC 2705 / NBRC 14298).